The primary structure comprises 72 residues: Aurein-2.3 (72 aa).

The first 22 residues, 1-22, serve as a signal peptide directing secretion; sequence MAFLKKSLFLVLFLGLVSLSIC. Residues 23–49 constitute a propeptide that is removed on maturation; that stretch reads EKEKRQNGEDEDENEAANHEEGSEEKR. Residues 27-47 are disordered; it reads RQNGEDEDENEAANHEEGSEE. Basic and acidic residues predominate over residues 38–47; the sequence is AANHEEGSEE. L65 is modified (leucine amide). Residues 69–72 constitute a propeptide that is removed on maturation; it reads NDVE.

Post-translationally, amidation is essential for antibacterial activity against Gram-positive bacteria. Expressed by the skin dorsal glands.

The protein localises to the secreted. It is found in the target cell membrane. Its function is as follows. Amphipathic alpha-helical antimicrobial peptide with weak to moderate activity against Gram-positive bacteria, and no activity against Gram-negative bacteria. Probably acts by disturbing membrane functions with its amphipathic structure. Strongly inhibits the formation of NO by neuronal nitric oxide synthase (nNOS) at micromolar concentrations. Acts by a non-competitive mechanism, probably by binding to calcium/calmodulin and as a consequence blocking calmodulin attachment to nNOS. The chain is Aurein-2.3 from Ranoidea aurea (Green and golden bell frog).